A 404-amino-acid chain; its full sequence is L-cysteine:1D-myo-inositol 2-amino-2-deoxy-alpha-D-glucopyranoside ligase (404 aa).

The segment at methionine 1–proline 20 is disordered. Cysteine 45 is a Zn(2+) binding site. L-cysteinyl-5'-AMP contacts are provided by residues cysteine 45–threonine 48, threonine 60, and asparagine 83–threonine 85. The 'HIGH' region motif lies at isoleucine 47–histidine 57. The 'ERGGDP' region motif lies at glutamate 185–proline 190. A disordered region spans residues glutamate 185–glycine 216. The segment covering arginine 186–leucine 199 has biased composition (basic and acidic residues). Residue tryptophan 226 coordinates L-cysteinyl-5'-AMP. Cysteine 230 contacts Zn(2+). Glycine 248 to aspartate 250 provides a ligand contact to L-cysteinyl-5'-AMP. A Zn(2+)-binding site is contributed by histidine 255. L-cysteinyl-5'-AMP is bound at residue leucine 280. Positions lysine 286–serine 290 match the 'KMSKS' region motif.

The protein belongs to the class-I aminoacyl-tRNA synthetase family. MshC subfamily. In terms of assembly, monomer. Zn(2+) serves as cofactor.

The catalysed reaction is 1D-myo-inositol 2-amino-2-deoxy-alpha-D-glucopyranoside + L-cysteine + ATP = 1D-myo-inositol 2-(L-cysteinylamino)-2-deoxy-alpha-D-glucopyranoside + AMP + diphosphate + H(+). Catalyzes the ATP-dependent condensation of GlcN-Ins and L-cysteine to form L-Cys-GlcN-Ins. This is L-cysteine:1D-myo-inositol 2-amino-2-deoxy-alpha-D-glucopyranoside ligase from Xylanimonas cellulosilytica (strain DSM 15894 / JCM 12276 / CECT 5975 / KCTC 9989 / LMG 20990 / NBRC 107835 / XIL07).